We begin with the raw amino-acid sequence, 98 residues long: Integration host factor subunit alpha (98 aa).

The segment at 49–70 (FGNFDLRDKNQRPGRNPKTGED) is disordered.

It belongs to the bacterial histone-like protein family. As to quaternary structure, heterodimer of an alpha and a beta chain.

Functionally, this protein is one of the two subunits of integration host factor, a specific DNA-binding protein that functions in genetic recombination as well as in transcriptional and translational control. This is Integration host factor subunit alpha from Sodalis glossinidius (strain morsitans).